The primary structure comprises 288 residues: N-acetyltransferase ECO1 (288 aa).

The interval Met-1–Thr-50 is disordered. Low complexity predominate over residues Gln-7–Ser-18. The span at Thr-27–Thr-50 shows a compositional bias: polar residues. Residues Thr-50 to His-74 form a CCHH-type zinc finger.

This sequence belongs to the acetyltransferase family. ECO subfamily.

The protein resides in the nucleus. Functionally, probable acetyltransferase required for the establishment of sister chromatid cohesion and couple the processes of cohesion and DNA replication to ensure that only sister chromatids become paired together. In contrast to the structural cohesins, the deposition and establishment factors are required only during S phase. Acts by acetylating the cohesin complex component SMC3. This chain is N-acetyltransferase ECO1 (ECO1), found in Debaryomyces hansenii (strain ATCC 36239 / CBS 767 / BCRC 21394 / JCM 1990 / NBRC 0083 / IGC 2968) (Yeast).